Consider the following 892-residue polypeptide: Translation initiation factor IF-2 (892 aa).

Positions 51–296 (REHGSAPNKL…KGKRKPSTLQ (246 aa)) are disordered. Residues 68-82 (STLNIPSTGGKSKSV) show a composition bias toward polar residues. Residues 99–217 (EQAKAEEQAQ…KMAAENEGKW (119 aa)) show a composition bias toward basic and acidic residues. Residues 224–237 (QTESADYHVTTSQH) show a composition bias toward polar residues. Over residues 239-254 (RAAEDENDAKVEGDRR) the composition is skewed to basic and acidic residues. Residues 255-269 (SRTRGGKATKQKKGN) show a composition bias toward basic residues. Residues 270-283 (KLSESKADREEARA) show a composition bias toward basic and acidic residues. The tr-type G domain occupies 391–560 (HRAPVVTIMG…LLQAEVMELK (170 aa)). The G1 stretch occupies residues 400–407 (GHVDHGKT). 400 to 407 (GHVDHGKT) is a binding site for GTP. The tract at residues 425 to 429 (GITQH) is G2. Residues 446-449 (DTPG) form a G3 region. GTP-binding positions include 446–450 (DTPGH) and 500–503 (NKID). The segment at 500–503 (NKID) is G4. A G5 region spans residues 536-538 (SAK).

It belongs to the TRAFAC class translation factor GTPase superfamily. Classic translation factor GTPase family. IF-2 subfamily.

It is found in the cytoplasm. Its function is as follows. One of the essential components for the initiation of protein synthesis. Protects formylmethionyl-tRNA from spontaneous hydrolysis and promotes its binding to the 30S ribosomal subunits. Also involved in the hydrolysis of GTP during the formation of the 70S ribosomal complex. This Yersinia enterocolitica serotype O:8 / biotype 1B (strain NCTC 13174 / 8081) protein is Translation initiation factor IF-2.